The chain runs to 172 residues: Gamma-crystallin-4 (172 aa).

Beta/gamma crystallin 'Greek key' domains lie at 1-37 (IFFY…RVES) and 38-80 (GNWI…RFIP). The tract at residues 81–85 (HPHSQ) is connecting peptide. Beta/gamma crystallin 'Greek key' domains follow at residues 86–126 (YKMR…NVSD) and 127–169 (GHWM…RRVH).

Belongs to the beta/gamma-crystallin family. As to quaternary structure, monomer.

Functionally, crystallins are the dominant structural components of the vertebrate eye lens. The sequence is that of Gamma-crystallin-4 (cryg4) from Xenopus laevis (African clawed frog).